We begin with the raw amino-acid sequence, 427 residues long: Glutamyl-tRNA reductase (427 aa).

Substrate-binding positions include 49–52 (TCNR), serine 105, 110–112 (EPQ), and glutamine 116. Cysteine 50 functions as the Nucleophile in the catalytic mechanism. 185–190 (AAGEMN) is a binding site for NADP(+).

The protein belongs to the glutamyl-tRNA reductase family. Homodimer.

It catalyses the reaction (S)-4-amino-5-oxopentanoate + tRNA(Glu) + NADP(+) = L-glutamyl-tRNA(Glu) + NADPH + H(+). The protein operates within porphyrin-containing compound metabolism; protoporphyrin-IX biosynthesis; 5-aminolevulinate from L-glutamyl-tRNA(Glu): step 1/2. In terms of biological role, catalyzes the NADPH-dependent reduction of glutamyl-tRNA(Glu) to glutamate 1-semialdehyde (GSA). This is Glutamyl-tRNA reductase from Acinetobacter baumannii (strain AB307-0294).